The primary structure comprises 476 residues: PRAME family member 6 (476 aa).

The stretch at 97–124 is one LRR 1; degenerate repeat; it reads RWKLQVLDLQDVCENFWMVWSEAMARGC. Residues 179-203 form an LRR 2; degenerate repeat; sequence HLCCKKLKILGMPFRNIRSILKMVN. One copy of the LRR 3; degenerate repeat lies at 204-230; that stretch reads LDCIQEVEVNCKWVLPILTQFTPYLGH. The stretch at 231–266 is one LRR 4; degenerate repeat; the sequence is MRNLQKLVLSHMDVSRYVSPEQKKEIVTQFTTQFLK. 5 LRR repeats span residues 267–292, 293–324, 325–345, 349–376, and 377–401; these read LCCL…LSCL, KTSL…SQLK, TLDL…QILL, AATL…ALSR, and CFEL…LLSH.

Belongs to the PRAME family. Component of a CRL2 E3 ubiquitin-protein ligase complex, also named ECS (Elongin BC-CUL2/5-SOCS-box protein) complex, composed of CUL2, Elongin BC (ELOB and ELOC), RBX1 and substrate-specific adapter PRAMEF6.

It participates in protein modification; protein ubiquitination. Substrate-recognition component of a Cul2-RING (CRL2) E3 ubiquitin-protein ligase complex, which mediates ubiquitination of target proteins, leading to their degradation. The CRL2(PRAMEF6) complex mediates ubiquitination and degradation of truncated MSRB1/SEPX1 selenoproteins produced by failed UGA/Sec decoding. In Homo sapiens (Human), this protein is PRAME family member 6.